The sequence spans 494 residues: Zinc finger and SCAN domain-containing protein 30 (494 aa).

The SCAN box domain occupies 48 to 130 (RQKFRQFSYS…TMLEELEKEL (83 aa)). Residue lysine 197 forms a Glycyl lysine isopeptide (Lys-Gly) (interchain with G-Cter in SUMO2) linkage. 7 consecutive C2H2-type zinc fingers follow at residues 301–323 (YECFDCGKAFCQSSKLIRHQRIH), 329–351 (YACKECGKAFSLSSDLVRHQRIH), 357–379 (YECCECGKAFRGSSELIRHRRIH), 385–407 (YECGECGKAFSRSSALIQHKKIH), 413–435 (YECIACGKAFGRSSILIEHQRIH), 441–463 (YECNECGKSFNQSSALTQHQRIH), and 469–491 (YECSECRKTFRHRSGLMQHQRTH).

This sequence belongs to the krueppel C2H2-type zinc-finger protein family.

The protein resides in the nucleus. May be involved in transcriptional regulation. The polypeptide is Zinc finger and SCAN domain-containing protein 30 (ZSCAN30) (Homo sapiens (Human)).